Reading from the N-terminus, the 476-residue chain is Efflux pump atB (476 aa).

Residues 1–38 (MAPQLAGSSHSSSASDQAHRQSSDPALESGSDTHVGSI) are disordered. The next 10 helical transmembrane spans lie at 69 to 89 (LIVA…LAPL), 96 to 116 (KPVY…CAVA), 127 to 147 (FFNG…VGDL), 186 to 206 (WSFY…SLLV), 264 to 284 (LLLC…FGAF), 294 to 314 (FNLW…IIGI), 347 to 367 (LPPA…FAWT), 372 to 392 (VHWI…IMIF), 403 to 425 (YPLY…AAAF), and 440 to 460 (WAGF…YIFY).

This sequence belongs to the major facilitator superfamily.

The protein resides in the cell membrane. Efflux pump that might be required for efficient secretion of terreic acid. The sequence is that of Efflux pump atB from Aspergillus terreus (strain NIH 2624 / FGSC A1156).